The sequence spans 231 residues: MQDSPKLTARQQQILDLIQSTIERTGAPPTRAEIATEFGFRSANAAEEHLQALARKGVIELLGGTSRGIRLKSDTLRSINESRLRGIGQQFSLPLSNMPPAQLTLPLVGRVAAGSPILAQQHIDQSYTFEAHMFSRKPDFLLKVRGMSMRDAGILDGDLIAVQRASEAKNGQIVVARLGDEVTVKRWRRSKSGIDLIPENPDFDIIHVPADSPDFALEGLAVGLIRNTMLM.

The H-T-H motif DNA-binding region spans 31–51; the sequence is RAEIATEFGFRSANAAEEHLQ. Catalysis depends on for autocatalytic cleavage activity residues S148 and K185.

This sequence belongs to the peptidase S24 family. As to quaternary structure, homodimer.

It carries out the reaction Hydrolysis of Ala-|-Gly bond in repressor LexA.. Its function is as follows. Represses a number of genes involved in the response to DNA damage (SOS response), including recA and lexA. In the presence of single-stranded DNA, RecA interacts with LexA causing an autocatalytic cleavage which disrupts the DNA-binding part of LexA, leading to derepression of the SOS regulon and eventually DNA repair. In Leptothrix cholodnii (strain ATCC 51168 / LMG 8142 / SP-6) (Leptothrix discophora (strain SP-6)), this protein is LexA repressor.